The sequence spans 758 residues: Thiosulfate reductase molybdopterin-containing subunit PhsA (758 aa).

Positions 1–30 form a signal peptide, tat-type signal; that stretch reads MSISRRSFLQGVGIGCSACALGAFPPGALA. Positions 41–97 constitute a 4Fe-4S Mo/W bis-MGD-type domain; the sequence is TTLTPSLCEMCSFRCPIQAQVVNNKTVFIQGNPSAPQQGTRICARGGSGVSLVNDPQ. [4Fe-4S] cluster contacts are provided by cysteine 48, cysteine 51, cysteine 55, and cysteine 83.

Belongs to the prokaryotic molybdopterin-containing oxidoreductase family. As to quaternary structure, composed of three subunits: PhsA, PhsB and PhsC. [4Fe-4S] cluster serves as cofactor. The cofactor is Mo-bis(molybdopterin guanine dinucleotide). Post-translationally, predicted to be exported by the Tat system. The position of the signal peptide cleavage has not been experimentally proven.

Its subcellular location is the periplasm. It carries out the reaction a quinone + hydrogen sulfide + sulfite + 2 H(+) = thiosulfate + a quinol. Functionally, component of the PhsABC thiosulfate reductase that catalyzes the reduction of thiosulfate to sulfite and hydrogen sulfide, with menaquinol as the sole electron donor. Proton motive force (PMF) is required to drive transmembrane electron transfer within the reductase. The PhsA subunit contains the active site molybdenum-bis(molybdopterin guanine dinucleotide) (Mo-bis-MGD) cofactor. This Salmonella typhimurium (strain LT2 / SGSC1412 / ATCC 700720) protein is Thiosulfate reductase molybdopterin-containing subunit PhsA.